The following is a 524-amino-acid chain: Bifunctional purine biosynthesis protein PurH (524 aa).

The MGS-like domain occupies 1–145 (MIKQALLSVS…KNHRDVTVIV (145 aa)).

The protein belongs to the PurH family.

The catalysed reaction is (6R)-10-formyltetrahydrofolate + 5-amino-1-(5-phospho-beta-D-ribosyl)imidazole-4-carboxamide = 5-formamido-1-(5-phospho-D-ribosyl)imidazole-4-carboxamide + (6S)-5,6,7,8-tetrahydrofolate. It catalyses the reaction IMP + H2O = 5-formamido-1-(5-phospho-D-ribosyl)imidazole-4-carboxamide. It participates in purine metabolism; IMP biosynthesis via de novo pathway; 5-formamido-1-(5-phospho-D-ribosyl)imidazole-4-carboxamide from 5-amino-1-(5-phospho-D-ribosyl)imidazole-4-carboxamide (10-formyl THF route): step 1/1. Its pathway is purine metabolism; IMP biosynthesis via de novo pathway; IMP from 5-formamido-1-(5-phospho-D-ribosyl)imidazole-4-carboxamide: step 1/1. This Cupriavidus metallidurans (strain ATCC 43123 / DSM 2839 / NBRC 102507 / CH34) (Ralstonia metallidurans) protein is Bifunctional purine biosynthesis protein PurH.